Reading from the N-terminus, the 73-residue chain is Large ribosomal subunit protein bL31 (73 aa).

It belongs to the bacterial ribosomal protein bL31 family. Type A subfamily. As to quaternary structure, part of the 50S ribosomal subunit.

Binds the 23S rRNA. In Rhodospirillum centenum (strain ATCC 51521 / SW), this protein is Large ribosomal subunit protein bL31.